A 906-amino-acid polypeptide reads, in one-letter code: Alanine--tRNA ligase (906 aa).

Zn(2+) contacts are provided by H600, H604, C703, and H707.

Belongs to the class-II aminoacyl-tRNA synthetase family. Homodimer. It depends on Zn(2+) as a cofactor.

Its subcellular location is the cytoplasm. It catalyses the reaction tRNA(Ala) + L-alanine + ATP = L-alanyl-tRNA(Ala) + AMP + diphosphate. Functionally, catalyzes the attachment of alanine to tRNA(Ala) in a two-step reaction: alanine is first activated by ATP to form Ala-AMP and then transferred to the acceptor end of tRNA(Ala). Incorrectly charged aminoacyl-tRNA(Ala) is also edited in situ by the editing domain. This Archaeoglobus fulgidus (strain ATCC 49558 / DSM 4304 / JCM 9628 / NBRC 100126 / VC-16) protein is Alanine--tRNA ligase (alaS).